Consider the following 209-residue polypeptide: Transmembrane domain-containing protein TMIGD3 (209 aa).

The N-terminal stretch at 1–15 (MEFLLLLSLALFSDA) is a signal peptide. The chain crosses the membrane as a helical span at residues 152 to 172 (SILIICILITSLGIIFIISHL). The tract at residues 179–201 (QRNREVTGKSISRNPQASQGPSM) is disordered. The segment covering 187–201 (KSISRNPQASQGPSM) has biased composition (polar residues).

The protein localises to the membrane. The sequence is that of Transmembrane domain-containing protein TMIGD3 (Tmigd3) from Mus musculus (Mouse).